The primary structure comprises 303 residues: Haloalkane dehalogenase (303 aa).

The AB hydrolase-1 domain maps to 48-192; sequence PVLLLHGEPS…GTVTKLSQAV (145 aa). Asp123 functions as the Nucleophile in the catalytic mechanism. Residue Asp250 is the Proton donor of the active site. The active-site Proton acceptor is the His280.

The protein belongs to the haloalkane dehalogenase family. Type 1 subfamily. In terms of assembly, monomer.

It carries out the reaction 1-haloalkane + H2O = a halide anion + a primary alcohol + H(+). Functionally, catalyzes hydrolytic cleavage of carbon-halogen bonds in halogenated aliphatic compounds, leading to the formation of the corresponding primary alcohols, halide ions and protons. This chain is Haloalkane dehalogenase, found in Psychrobacter cryohalolentis (strain ATCC BAA-1226 / DSM 17306 / VKM B-2378 / K5).